Here is a 66-residue protein sequence, read N- to C-terminus: DNA-directed RNA polymerase subunit Rpo10 (66 aa).

Zn(2+) contacts are provided by Cys7, Cys10, Cys44, and Cys45.

Belongs to the archaeal Rpo10/eukaryotic RPB10 RNA polymerase subunit family. In terms of assembly, part of the RNA polymerase complex. Zn(2+) is required as a cofactor.

It localises to the cytoplasm. The enzyme catalyses RNA(n) + a ribonucleoside 5'-triphosphate = RNA(n+1) + diphosphate. In terms of biological role, DNA-dependent RNA polymerase (RNAP) catalyzes the transcription of DNA into RNA using the four ribonucleoside triphosphates as substrates. In Pyrobaculum neutrophilum (strain DSM 2338 / JCM 9278 / NBRC 100436 / V24Sta) (Thermoproteus neutrophilus), this protein is DNA-directed RNA polymerase subunit Rpo10.